We begin with the raw amino-acid sequence, 558 residues long: Phosphatidylserine lipase ABHD16A (558 aa).

2 consecutive transmembrane segments (helical) span residues 60 to 80 (ILAL…FAFF) and 93 to 113 (VVPF…VACL). At 114 to 558 (RGIGRWTNPQ…AQHFQMPWHL (445 aa)) the chain is on the cytoplasmic side. One can recognise an AB hydrolase-1 domain in the interval 281–406 (LVICCEGNAG…ALVTRTVRQH (126 aa)). Catalysis depends on charge relay system residues serine 355, aspartate 430, and histidine 507.

The protein belongs to the AB hydrolase superfamily. ABHD16 family.

It localises to the membrane. The catalysed reaction is 1-heptadecanoyl-2-(5Z,8Z,11Z,14Z-eicosatetraenoyl)-sn-glycero-3-phosphoserine + H2O = 1-heptadecanoyl-sn-glycero-3-phosphoserine + (5Z,8Z,11Z,14Z)-eicosatetraenoate + H(+). It carries out the reaction 1-hexadecanoyl-2-(9Z-octadecenoyl)-sn-glycero-3-phospho-L-serine + H2O = 1-hexadecanoyl-sn-glycero-3-phospho-L-serine + (9Z)-octadecenoate + H(+). The enzyme catalyses 1-octadecanoyl-2-(9Z,12Z-octadecadienoyl)-sn-glycero-3-phosphoserine + H2O = 1-octadecanoyl-sn-glycero-3-phosphoserine + (9Z,12Z)-octadecadienoate + H(+). It catalyses the reaction 1-heptadecanoyl-2-(5Z,8Z,11Z,14Z-eicosatetraenoyl)-sn-glycero-3-phosphocholine + H2O = 1-heptadecanoyl-sn-glycero-3-phosphocholine + (5Z,8Z,11Z,14Z)-eicosatetraenoate + H(+). The catalysed reaction is 1-hexadecanoyl-2-(9Z-octadecenoyl)-sn-glycero-3-phosphoglycerol + H2O = 1-hexadecanoyl-sn-glycero-3-phosphoglycerol + (9Z)-octadecenoate + H(+). It carries out the reaction 1-hexadecanoyl-2-(9Z-octadecenoyl)-sn-glycero-3-phospho-(1D-myo-inositol) + H2O = 1-hexadecanoyl-sn-glycero-3-phospho-(1D-myo-inositol) + (9Z)-octadecenoate + H(+). The enzyme catalyses 1-heptadecanoyl-2-(5Z,8Z,11Z,14Z-eicosatetraenoyl)-sn-glycero-3-phosphoethanolamine + H2O = 1-heptadecanoyl-sn-glycero-3-phosphoethanolamine + (5Z,8Z,11Z,14Z)-eicosatetraenoate + H(+). It catalyses the reaction 1-hexadecanoyl-2-(9Z-octadecenoyl)-sn-glycero-3-phospho-(1'-sn-glycerol) + H2O = 1-hexadecanoyl-sn-glycero-3-phospho-(1'-sn-glycerol) + (9Z)-octadecenoate + H(+). The catalysed reaction is Hydrolyzes glycerol monoesters of long-chain fatty acids.. It carries out the reaction 1-tetradecanoylglycerol + H2O = tetradecanoate + glycerol + H(+). The enzyme catalyses 2-hexadecanoylglycerol + H2O = glycerol + hexadecanoate + H(+). It catalyses the reaction 1-(9Z-octadecenoyl)-glycerol + H2O = glycerol + (9Z)-octadecenoate + H(+). The catalysed reaction is 2-(9Z-octadecenoyl)-glycerol + H2O = glycerol + (9Z)-octadecenoate + H(+). It carries out the reaction 2-(9Z,12Z-octadecadienoyl)-glycerol + H2O = (9Z,12Z)-octadecadienoate + glycerol + H(+). The enzyme catalyses 1-(5Z,8Z,11Z,14Z-eicosatetraenoyl)-glycerol + H2O = glycerol + (5Z,8Z,11Z,14Z)-eicosatetraenoate + H(+). It catalyses the reaction 2-(5Z,8Z,11Z,14Z-eicosatetraenoyl)-glycerol + H2O = glycerol + (5Z,8Z,11Z,14Z)-eicosatetraenoate + H(+). The catalysed reaction is prostaglandin D2-1-glycerol ester + H2O = prostaglandin D2 + glycerol + H(+). It carries out the reaction 2-glyceryl-15-deoxy-Delta(12,14)-prostaglandin J2 + H2O = 15-deoxy-Delta(12,14)-prostaglandin J2 + glycerol + H(+). The enzyme catalyses 1-(9Z,12Z-octadecadienoyl)-glycerol + H2O = (9Z,12Z)-octadecadienoate + glycerol + H(+). Specifically inhibited by alpha-alkylidene-beta-lactone KC01 ((Z)-6-(2-Oxo-4-tridecyloxetan-3-ylidene)hexanamide). Its function is as follows. Phosphatidylserine (PS) lipase that mediates the hydrolysis of phosphatidylserine to generate lysophosphatidylserine (LPS). LPS constitutes a class of signaling lipids that regulates immunological and neurological processes. Has no activity towards diacylglycerol, triacylglycerol or lysophosphatidylserine lipase. Also has monoacylglycerol lipase activity, with preference for 1-(9Z,12Z-octadecadienoyl)-glycerol (1-LG) and 2-glyceryl-15-deoxy-Delta(12,14)-prostaglandin J2 (15d-PGJ(2)-G). In Mus musculus (Mouse), this protein is Phosphatidylserine lipase ABHD16A.